The chain runs to 557 residues: Venom carboxylesterase-6 (557 aa).

The first 21 residues, 1–21, serve as a signal peptide directing secretion; that stretch reads MYMLKLSYILLFLGFVKFSWQ. An intrachain disulfide couples Cys88 to Cys108. An N-linked (GlcNAc...) asparagine glycan is attached at Asn145. Ser212 acts as the Acyl-ester intermediate in catalysis. Cys264 and Cys275 form a disulfide bridge. Glu341 (charge relay system) is an active-site residue. A glycan (N-linked (GlcNAc...) asparagine) is linked at Asn374. His464 functions as the Charge relay system in the catalytic mechanism. 3 N-linked (GlcNAc...) asparagine glycosylation sites follow: Asn478, Asn528, and Asn542.

It belongs to the type-B carboxylesterase/lipase family. Expressed by the venom gland.

The protein localises to the secreted. It carries out the reaction a carboxylic ester + H2O = an alcohol + a carboxylate + H(+). The protein is Venom carboxylesterase-6 of Apis mellifera (Honeybee).